We begin with the raw amino-acid sequence, 556 residues long: Formate--tetrahydrofolate ligase (556 aa).

65 to 72 (TPAGEGKS) is a binding site for ATP.

It belongs to the formate--tetrahydrofolate ligase family.

The enzyme catalyses (6S)-5,6,7,8-tetrahydrofolate + formate + ATP = (6R)-10-formyltetrahydrofolate + ADP + phosphate. Its pathway is one-carbon metabolism; tetrahydrofolate interconversion. This chain is Formate--tetrahydrofolate ligase, found in Clostridium perfringens (strain SM101 / Type A).